Reading from the N-terminus, the 176-residue chain is Shikimate kinase (176 aa).

Position 14–19 (14–19 (GAGKST)) interacts with ATP. Ser18 is a binding site for Mg(2+). Residues Asp36, Arg60, and Gly83 each contribute to the substrate site. Arg121 is an ATP binding site. A substrate-binding site is contributed by Arg140.

Belongs to the shikimate kinase family. Monomer. Mg(2+) is required as a cofactor.

The protein resides in the cytoplasm. The catalysed reaction is shikimate + ATP = 3-phosphoshikimate + ADP + H(+). The protein operates within metabolic intermediate biosynthesis; chorismate biosynthesis; chorismate from D-erythrose 4-phosphate and phosphoenolpyruvate: step 5/7. Functionally, catalyzes the specific phosphorylation of the 3-hydroxyl group of shikimic acid using ATP as a cosubstrate. This Francisella philomiragia subsp. philomiragia (strain ATCC 25017 / CCUG 19701 / FSC 153 / O#319-036) protein is Shikimate kinase.